A 419-amino-acid chain; its full sequence is Histidine--tRNA ligase (419 aa).

It belongs to the class-II aminoacyl-tRNA synthetase family. In terms of assembly, homodimer.

The protein resides in the cytoplasm. The enzyme catalyses tRNA(His) + L-histidine + ATP = L-histidyl-tRNA(His) + AMP + diphosphate + H(+). This Syntrophotalea carbinolica (strain DSM 2380 / NBRC 103641 / GraBd1) (Pelobacter carbinolicus) protein is Histidine--tRNA ligase.